Here is a 726-residue protein sequence, read N- to C-terminus: Catalase-peroxidase (726 aa).

A disordered region spans residues Met-1–Arg-25. The segment at residues Trp-96 to Tyr-218 is a cross-link (tryptophyl-tyrosyl-methioninium (Trp-Tyr) (with M-244)). His-97 serves as the catalytic Proton acceptor. The tryptophyl-tyrosyl-methioninium (Tyr-Met) (with W-96) cross-link spans Tyr-218–Met-244. His-259 lines the heme b pocket.

It belongs to the peroxidase family. Peroxidase/catalase subfamily. In terms of assembly, homodimer or homotetramer. The cofactor is heme b. Formation of the three residue Trp-Tyr-Met cross-link is important for the catalase, but not the peroxidase activity of the enzyme.

The catalysed reaction is H2O2 + AH2 = A + 2 H2O. The enzyme catalyses 2 H2O2 = O2 + 2 H2O. Functionally, bifunctional enzyme with both catalase and broad-spectrum peroxidase activity. The protein is Catalase-peroxidase of Chelativorans sp. (strain BNC1).